A 302-amino-acid polypeptide reads, in one-letter code: uncharacterized protein (302 aa).

E47 is a catalytic residue.

It belongs to the PhzF family.

This is an uncharacterized protein from Mesorhizobium japonicum (strain LMG 29417 / CECT 9101 / MAFF 303099) (Mesorhizobium loti (strain MAFF 303099)).